Here is a 406-residue protein sequence, read N- to C-terminus: uncharacterized protein (406 aa).

The protein localises to the plastid. It localises to the chloroplast. This is an uncharacterized protein from Euglena gracilis.